Here is a 289-residue protein sequence, read N- to C-terminus: 4-diphosphocytidyl-2-C-methyl-D-erythritol kinase (289 aa).

Lysine 11 is an active-site residue. 95 to 105 (PMGGGIGGGSS) serves as a coordination point for ATP. Residue aspartate 137 is part of the active site.

This sequence belongs to the GHMP kinase family. IspE subfamily.

The catalysed reaction is 4-CDP-2-C-methyl-D-erythritol + ATP = 4-CDP-2-C-methyl-D-erythritol 2-phosphate + ADP + H(+). It participates in isoprenoid biosynthesis; isopentenyl diphosphate biosynthesis via DXP pathway; isopentenyl diphosphate from 1-deoxy-D-xylulose 5-phosphate: step 3/6. In terms of biological role, catalyzes the phosphorylation of the position 2 hydroxy group of 4-diphosphocytidyl-2C-methyl-D-erythritol. The polypeptide is 4-diphosphocytidyl-2-C-methyl-D-erythritol kinase (Aeromonas salmonicida (strain A449)).